Here is a 1337-residue protein sequence, read N- to C-terminus: MVFTPSKEQEPAINDRQKDILVSASAGSGKTAVLVERVIQLMETGLSKDAKPSERPNIDDILMVTFTTDAAKNMRDRIRRRLVGATDEHMKAQVARLALANISTIHSFCEQLIKRYYYVIDLDPQFRLIDDAEQQLLKEQAWQATLDDWVANPDQVGALHQLIDNFGAGNLESVVQALDTEADAQPHPSDWLAGLSGLYQFEEGADPRQSAFFKRLLEPLVGPQLKELRDQWAALGEVGPARFAEQVEEDLAKLATTVDDQGHLLGSWDSLAQTLNKKNFAPKLRKRKDDDDPELLDELGVQRGGLRDQLGDLHDTYFFQSAADLVKYGQKAGALIEILTRVATDFRCHYQIIKQDRRLLDFSDLEHYAYAILTGENINPKVTWSDEEARAKRQAAAQVQAELQRHYKEIMIDEYQDTNRLQDDLLRLLHKSGQNHRFMVGDMKQSIYRFRQADPTLFKDYYDQFSADGQSSEALDLSDNYRSRHEVTDLVNLIFEQLMDQQLGEMVYDDKASLKPKADWGADRDQASPATPELLLFDGGVKKTTANPTGEDAIVVRQPEDKVASEVWLIGQRIRELLAKETILDPETKRVRPITPGDIAILSRAKRIHSVIAEQFAKLNLPVMVHGVENYFKATEIRVVMSLLKVIDNPYQDVPLAAVLRSPLIQVAPEVAAKFGLSQGENRIGFTEPELAYLKVNSTSKDFFGVVQQNYYAWRDQEVEAVENHDALTEEELAERVAGDPAGLATKEELGVNCGLIYLKLARFFELRDHLRRVAQRRPLVDLIWTIYQATGYLDYVGGMSGGPQRQANLHALYERASGYEESGFKGLYQFIHFIEQMQKKNDDLGEATTALAGDAINVMTIHKSKGLQFPIVFLVETTHQFQADRDPVTIEPQAGLGFTYVDSTANETMRVKHPLVQQAALKEKKKRQDRAEEMRLLYVALTRAEQRLFITGYVKDADLTKKMDKWNRAFDSASPLLTTTTRLKGQSMLDWIMMTLVRTANFPTLREGVEAAATPLRGLTKAAYQIKLQNADQVQAALNTPLDLHPNATAEQATPAAATSRQFKADLERVLNFTYPDQVATQTTAFQAVSTVREAFARQDPTNLEMGRLEIDRDQIKEAGAYLAPEERAFENPAFITGASDQEPTGTAIGTATHLVFQKLPLTEPLDEGAVRALIKSLTESGLIDNPQVAAGIDVAGVVSFYQTGLGQVITAHPEQVHREVPFSMLLSAHDLFSGIGATDDSEVLIHGIIDGYVQHDDQIDLFDYKTDRISQAHPEEDLQELADKYSGQLVLYADALTKMTGVPLEKIHRHLYFTRAKRVVTLSAPPSSHEPKEEA.

Residues 3-484 (FTPSKEQEPA…LDLSDNYRSR (482 aa)) form the UvrD-like helicase ATP-binding domain. 24–31 (ASAGSGKT) contributes to the ATP binding site. Residues 522–867 (ADRDQASPAT…NVMTIHKSKG (346 aa)) form the UvrD-like helicase C-terminal domain.

It belongs to the helicase family. AddA subfamily. As to quaternary structure, heterodimer of AddA and AddB/RexB. Mg(2+) serves as cofactor.

The catalysed reaction is Couples ATP hydrolysis with the unwinding of duplex DNA by translocating in the 3'-5' direction.. The enzyme catalyses ATP + H2O = ADP + phosphate + H(+). The heterodimer acts as both an ATP-dependent DNA helicase and an ATP-dependent, dual-direction single-stranded exonuclease. Recognizes the chi site generating a DNA molecule suitable for the initiation of homologous recombination. The AddA nuclease domain is required for chi fragment generation; this subunit has the helicase and 3' -&gt; 5' nuclease activities. This Limosilactobacillus fermentum (strain NBRC 3956 / LMG 18251) (Lactobacillus fermentum) protein is ATP-dependent helicase/nuclease subunit A.